Reading from the N-terminus, the 186-residue chain is MSEGTDLKELKRRMDGAIAAFKSDIASLRTGRASANILDPVTIEAYGSRMPLNQVANITVPEPRMLSVSVWDKSMVGAVERGIRESNLGLNPIIDGQNLRIPLPELNEERRRSLVKVAHEYAEKAKVAIRHVRRDGMDGLKKAEKDGDIGQDEGRSLSERVQKMTDETISDIDRLLVDKEKEIMQV.

Positions 140-163 (LKKAEKDGDIGQDEGRSLSERVQK) are disordered.

The protein belongs to the RRF family.

The protein localises to the cytoplasm. Its function is as follows. Responsible for the release of ribosomes from messenger RNA at the termination of protein biosynthesis. May increase the efficiency of translation by recycling ribosomes from one round of translation to another. In Rhizobium rhizogenes (strain K84 / ATCC BAA-868) (Agrobacterium radiobacter), this protein is Ribosome-recycling factor.